Here is a 680-residue protein sequence, read N- to C-terminus: Probable ATP-dependent RNA helicase pitchoune (680 aa).

Residues 1–168 form a disordered region; sequence MSIREKLLMK…GKPAKDDEPF (168 aa). The segment covering 29-42 has biased composition (polar residues); that stretch reads KNAQKQEPPKQNGN. Residues 59 to 69 are compositionally biased toward acidic residues; the sequence is DEDDDLEEDFQ. The span at 74-83 shows a compositional bias: basic residues; the sequence is PKKKQQKQPP. Over residues 95 to 141 the composition is skewed to acidic residues; that stretch reads SESDDDEQEDEADEDSDLDEVAEVDEEDVDSGSEDDDQQEDEDEEEP. The Q motif signature appears at 187–215; the sequence is FASLKGAVSEATLRAIKEMGFTEMTEIQS. Residues 218–393 enclose the Helicase ATP-binding domain; it reads LTPLLKGRDL…KLALKSEPIY (176 aa). Position 231–238 (231–238) interacts with ATP; that stretch reads AQTGSGKT. The DEVD box motif lies at 341–344; sequence DEVD. The Helicase C-terminal domain maps to 407–577; the sequence is GLEQGYIVCP…DIQLQLEKLI (171 aa). The disordered stretch occupies residues 659–680; the sequence is GSASKQRHFKQVNRDQAKKFMR. Residues 670 to 680 are compositionally biased toward basic and acidic residues; the sequence is VNRDQAKKFMR.

This sequence belongs to the DEAD box helicase family. DDX18/HAS1 subfamily.

It localises to the nucleus. The protein resides in the nucleolus. The enzyme catalyses ATP + H2O = ADP + phosphate + H(+). Functionally, probable RNA-dependent helicase. Functions in cell growth and proliferation. May have a role in ribosome biogenesis and, consequently, in protein biosynthesis. The polypeptide is Probable ATP-dependent RNA helicase pitchoune (pit) (Drosophila melanogaster (Fruit fly)).